The following is a 450-amino-acid chain: MVLEMPAARVPAGPDARDVRQALARHVLTDGYDLVLDLEASAGPWLVDAVTGTRYLDLFSFFASAPLGINPSCIVDDPAFVGELAAAAVNKPSNPDVYTVPYAKFVTTFARVLGDPLLPHLFFVDGGALAVENALKAAFDWKAQKLGLDDRAVNRLQVLHLERSFHGRSGYTMSLTNTDPSKTARYPKFDWPRIPAPALEHPLTTHAEANREAERRALEAAEEAFRAADGMIACFLAEPIQGEGGDNHFSAEFLQAMQDLCHRHDALFVLDEVQSGCGLTGTAWAYQQLGLRPDLVAFGKKTQVCGVMGGGRIGEVESNVFAVSSRISSTWGGNLADMVRATRVLETIERTDLLDSVVQRGKYLRDGLEALAERHPGVVTNARGRGLMCAVDLPDTEQRDAVLRRMYTGHQVIALPCGTRGLRFRPPLTVTESELDQGLEALAASLASRG.

Glycine 127 and alanine 128 together coordinate pyridoxal 5'-phosphate. Arginine 168 and glutamine 274 together coordinate 2-oxoglutarate. Arginine 168 is a binding site for L-lysine. Glutamine 274 provides a ligand contact to pyridoxal 5'-phosphate. An N6-(pyridoxal phosphate)lysine modification is found at lysine 300. Arginine 423 is a binding site for 2-oxoglutarate.

This sequence belongs to the class-III pyridoxal-phosphate-dependent aminotransferase family. Requires pyridoxal 5'-phosphate as cofactor.

The enzyme catalyses L-lysine + 2-oxoglutarate = (S)-2-amino-6-oxohexanoate + L-glutamate. It functions in the pathway antibiotic biosynthesis; cephamycin C biosynthesis. Functionally, catalyzes the transfer of the terminal amino group of L-lysine to alpha-ketoglutarate to yield L-glutamate and 2-aminoadipate 6-semialdehyde ((S)-2-amino-6-oxohexanoate), which is spontaneously converted to the dehydrated form 1-piperideine 6-carboxylate. The protein is L-lysine-epsilon aminotransferase of Amycolatopsis lactamdurans (Nocardia lactamdurans).